We begin with the raw amino-acid sequence, 268 residues long: Glutamate racemase (268 aa).

Substrate contacts are provided by residues 13–14 (DS) and 45–46 (YG). Catalysis depends on Cys77, which acts as the Proton donor/acceptor. 78–79 (NT) contacts substrate. Cys185 serves as the catalytic Proton donor/acceptor. 186–187 (TH) lines the substrate pocket.

This sequence belongs to the aspartate/glutamate racemases family.

The enzyme catalyses L-glutamate = D-glutamate. The protein operates within cell wall biogenesis; peptidoglycan biosynthesis. Provides the (R)-glutamate required for cell wall biosynthesis. In Vibrio campbellii (strain ATCC BAA-1116), this protein is Glutamate racemase.